The sequence spans 552 residues: MAEKQKHDGRVKIGHYVLGDTLGVGTFGKVKIGEHQLTGHKVAVKILNRQKIRSLDVVGKIKREIQNLKLFRHPHIIKLYQVISTPTDFFMVMEYVSGGELFDYICKHGRVEEMEARRLFQQILSAVDYCHRHMVVHRDLKPENVLLDAHMNAKIADFGLSNMMSDGEFLRTSCGSPNYAAPEVISGRLYAGPEVDIWSCGVILYALLCGTLPFDDEHVPTLFKKIRGGVFYIPEYLNRSVATLLMHMLQVDPLKRATIKDIREHEWFKQDLPSYLFPEDPSYDANVIDDEAVKEVCEKFECTESEVMNSLYSGDPQDQLAVAYHLIIDNRRIMNQASEFYLASSPPSGSFMDDSAMHIPPGLKPHPERMPPLIADSPKARCPLDALNTTKPKSLAVKKAKWHLGIRSQSKPYDIMAEVYRAMKQLDFEWKVVNAYHLRVRRKNPVTGNYVKMSLQLYLVDNRSYLLDFKSIDDEVVEQRSGSSTPQRSCSAAGLHRPRSSFDSTTAESHSLSGSLTGSLTGSTLSSVSPRLGSHTMDFFEMCASLITTLAR.

The Protein kinase domain occupies 16-268 (YVLGDTLGVG…IKDIREHEWF (253 aa)). ATP is bound by residues 22–30 (LGVGTFGKV) and lysine 45. Aspartate 139 functions as the Proton acceptor in the catalytic mechanism. Threonine 172 is subject to Phosphothreonine; by LKB1 and CaMKK2. A Phosphothreonine modification is found at threonine 258. Residues 291 to 376 (EAVKEVCEKF…PERMPPLIAD (86 aa)) are AIS. Serine 377 is subject to Phosphoserine. Positions 477–521 (VEQRSGSSTPQRSCSAAGLHRPRSSFDSTTAESHSLSGSLTGSLT) are disordered. The segment covering 480–490 (RSGSSTPQRSC) has biased composition (polar residues). Serine 491 is subject to Phosphoserine. Over residues 501–510 (SFDSTTAESH) the composition is skewed to polar residues. The segment covering 511–521 (SLSGSLTGSLT) has biased composition (low complexity).

It belongs to the protein kinase superfamily. CAMK Ser/Thr protein kinase family. SNF1 subfamily. In terms of assembly, AMPK is a heterotrimer of an alpha catalytic subunit (PRKAA1 or PRKAA2), a beta (PRKAB1 or PRKAB2) and a gamma non-catalytic subunits (PRKAG1, PRKAG2 or PRKAG3). Interacts with FNIP1 and FNIP2. Associates with internalized insulin receptor/INSR complexes on Golgi/endosomal membranes; PRKAA2/AMPK2 together with ATIC and HACD3/PTPLAD1 is proposed to be part of a signaling network regulating INSR autophosphorylation and endocytosis. Interacts with ARF6. The phosphorylated form at Thr-172 mediated by CamKK2 interacts with ACSS2. Mg(2+) serves as cofactor. Ubiquitinated. Post-translationally, phosphorylated at Thr-172 by STK11/LKB1 in complex with STE20-related adapter-alpha (STRADA) pseudo kinase and CAB39. Also phosphorylated at Thr-172 by CAMKK2; triggered by a rise in intracellular calcium ions, without detectable changes in the AMP/ATP ratio. CAMKK1 can also phosphorylate Thr-172, but at much lower level. Dephosphorylated by protein phosphatase 2A and 2C (PP2A and PP2C). Phosphorylated by ULK1; leading to negatively regulate AMPK activity and suggesting the existence of a regulatory feedback loop between ULK1 and AMPK. Dephosphorylated by PPM1A and PPM1B at Thr-172 (mediated by STK11/LKB1).

The protein resides in the cytoplasm. It localises to the nucleus. The catalysed reaction is L-seryl-[protein] + ATP = O-phospho-L-seryl-[protein] + ADP + H(+). It catalyses the reaction L-threonyl-[protein] + ATP = O-phospho-L-threonyl-[protein] + ADP + H(+). The enzyme catalyses L-seryl-[acetyl-CoA carboxylase] + ATP = O-phospho-L-seryl-[acetyl-CoA carboxylase] + ADP + H(+). It carries out the reaction L-seryl-[3-hydroxy-3-methylglutaryl-coenzyme A reductase] + ATP = O-phospho-L-seryl-[3-hydroxy-3-methylglutaryl-coenzyme A reductase] + ADP + H(+). Activated by phosphorylation on Thr-172. Binding of AMP to non-catalytic gamma subunit (PRKAG1, PRKAG2 or PRKAG3) results in allosteric activation, inducing phosphorylation on Thr-172. AMP-binding to gamma subunit also sustains activity by preventing dephosphorylation of Thr-172. ADP also stimulates Thr-172 phosphorylation, without stimulating already phosphorylated AMPK. ATP promotes dephosphorylation of Thr-172, rendering the enzyme inactive. Under physiological conditions AMPK mainly exists in its inactive form in complex with ATP, which is much more abundant than AMP. AMPK is activated by antihyperglycemic drug metformin, a drug prescribed to patients with type 2 diabetes: in vivo, metformin seems to mainly inhibit liver gluconeogenesis. However, metformin can be used to activate AMPK in muscle and other cells in culture or ex vivo. Selectively inhibited by compound C (6-[4-(2-Piperidin-1-yl-ethoxy)-phenyl)]-3-pyridin-4-yl-pyyrazolo[1,5-a] pyrimidine. Activated by resveratrol, a natural polyphenol present in red wine, and S17834, a synthetic polyphenol. Salicylate/aspirin directly activates kinase activity, primarily by inhibiting Thr-172 dephosphorylation. Its function is as follows. Catalytic subunit of AMP-activated protein kinase (AMPK), an energy sensor protein kinase that plays a key role in regulating cellular energy metabolism. In response to reduction of intracellular ATP levels, AMPK activates energy-producing pathways and inhibits energy-consuming processes: inhibits protein, carbohydrate and lipid biosynthesis, as well as cell growth and proliferation. AMPK acts via direct phosphorylation of metabolic enzymes, and by longer-term effects via phosphorylation of transcription regulators. Regulates lipid synthesis by phosphorylating and inactivating lipid metabolic enzymes such as ACACA, ACACB, GYS1, HMGCR and LIPE; regulates fatty acid and cholesterol synthesis by phosphorylating acetyl-CoA carboxylase (ACACA and ACACB) and hormone-sensitive lipase (LIPE) enzymes, respectively. Promotes lipolysis of lipid droplets by mediating phosphorylation of isoform 1 of CHKA (CHKalpha2). Regulates insulin-signaling and glycolysis by phosphorylating IRS1, PFKFB2 and PFKFB3. Involved in insulin receptor/INSR internalization. AMPK stimulates glucose uptake in muscle by increasing the translocation of the glucose transporter SLC2A4/GLUT4 to the plasma membrane, possibly by mediating phosphorylation of TBC1D4/AS160. Regulates transcription and chromatin structure by phosphorylating transcription regulators involved in energy metabolism such as CRTC2/TORC2, FOXO3, histone H2B, HDAC5, MEF2C, MLXIPL/ChREBP, EP300, HNF4A, p53/TP53, SREBF1, SREBF2 and PPARGC1A. Acts as a key regulator of glucose homeostasis in liver by phosphorylating CRTC2/TORC2, leading to CRTC2/TORC2 sequestration in the cytoplasm. In response to stress, phosphorylates 'Ser-36' of histone H2B (H2BS36ph), leading to promote transcription. Acts as a key regulator of cell growth and proliferation by phosphorylating FNIP1, TSC2, RPTOR, WDR24 and ATG1/ULK1: in response to nutrient limitation, negatively regulates the mTORC1 complex by phosphorylating RPTOR component of the mTORC1 complex and by phosphorylating and activating TSC2. Also phosphorylates and inhibits GATOR2 subunit WDR24 in response to nutrient limitation, leading to suppress glucose-mediated mTORC1 activation. In response to energetic stress, phosphorylates FNIP1, inactivating the non-canonical mTORC1 signaling, thereby promoting nuclear translocation of TFEB and TFE3, and inducing transcription of lysosomal or autophagy genes. In response to nutrient limitation, promotes autophagy by phosphorylating and activating ATG1/ULK1. In that process, it also activates WDR45/WIPI4. Phosphorylates CASP6, thereby preventing its autoprocessing and subsequent activation. AMPK also acts as a regulator of circadian rhythm by mediating phosphorylation of CRY1, leading to destabilize it. May regulate the Wnt signaling pathway by phosphorylating CTNNB1, leading to stabilize it. Also acts as a regulator of cellular polarity by remodeling the actin cytoskeleton; probably by indirectly activating myosin. Also phosphorylates CFTR, EEF2K, KLC1, NOS3 and SLC12A1. Plays an important role in the differential regulation of pro-autophagy (composed of PIK3C3, BECN1, PIK3R4 and UVRAG or ATG14) and non-autophagy (composed of PIK3C3, BECN1 and PIK3R4) complexes, in response to glucose starvation. Can inhibit the non-autophagy complex by phosphorylating PIK3C3 and can activate the pro-autophagy complex by phosphorylating BECN1. Upon glucose starvation, promotes ARF6 activation in a kinase-independent manner leading to cell migration. Upon glucose deprivation mediates the phosphorylation of ACSS2 at 'Ser-659', which exposes the nuclear localization signal of ACSS2, required for its interaction with KPNA1 and nuclear translocation. Upon stress, regulates mitochondrial fragmentation through phosphorylation of MTFR1L. The protein is 5'-AMP-activated protein kinase catalytic subunit alpha-2 of Homo sapiens (Human).